The primary structure comprises 201 residues: Imidazoleglycerol-phosphate dehydratase (201 aa).

Belongs to the imidazoleglycerol-phosphate dehydratase family.

The protein resides in the cytoplasm. It catalyses the reaction D-erythro-1-(imidazol-4-yl)glycerol 3-phosphate = 3-(imidazol-4-yl)-2-oxopropyl phosphate + H2O. It participates in amino-acid biosynthesis; L-histidine biosynthesis; L-histidine from 5-phospho-alpha-D-ribose 1-diphosphate: step 6/9. This is Imidazoleglycerol-phosphate dehydratase from Methanopyrus kandleri (strain AV19 / DSM 6324 / JCM 9639 / NBRC 100938).